We begin with the raw amino-acid sequence, 476 residues long: ENTH domain-containing protein C794.11c (476 aa).

Positions 30 to 154 (YTSMEARVRE…VELLNDSERI (125 aa)) constitute an ENTH domain. 4 disordered regions span residues 157–198 (ERKR…GSYR), 213–308 (NGYH…GFGD), 410–429 (QAGLGLTSQQPTAAKSSGSN), and 444–472 (VHQENSTRERVVSSSSEPVSKTQNFLDND). Ser173 carries the phosphoserine modification. Low complexity-rich tracts occupy residues 178 to 198 (RISTSSKSRFPSFGSSRGSYR) and 213 to 222 (NGYHDSSSMS). Ser228 is modified (phosphoserine). Residues 229–240 (DNDVEEYNEDGD) show a composition bias toward acidic residues. A Phosphotyrosine modification is found at Tyr235. Ser243 and Ser244 each carry phosphoserine. Basic and acidic residues predominate over residues 262–271 (QSDKAPEQPK). Positions 444–454 (VHQENSTRERV) are enriched in basic and acidic residues. Ser459 carries the post-translational modification Phosphoserine.

In Schizosaccharomyces pombe (strain 972 / ATCC 24843) (Fission yeast), this protein is ENTH domain-containing protein C794.11c.